A 65-amino-acid polypeptide reads, in one-letter code: MVGVQLMDNETIDKLLKRFKKKYERAGVLKEFRKRAYYTKPSVDDRLKRARSKRRAQRANEESNA.

The segment at 43–65 (VDDRLKRARSKRRAQRANEESNA) is disordered. Positions 48–57 (KRARSKRRAQ) are enriched in basic residues.

The protein belongs to the bacterial ribosomal protein bS21 family.

In Chloroherpeton thalassium (strain ATCC 35110 / GB-78), this protein is Small ribosomal subunit protein bS21.